Consider the following 346-residue polypeptide: NADP-dependent alcohol dehydrogenase C (346 aa).

Residues C41, H63, C94, C97, C100, C108, and C158 each coordinate Zn(2+).

Belongs to the zinc-containing alcohol dehydrogenase family. Zn(2+) serves as cofactor.

It carries out the reaction a primary alcohol + NADP(+) = an aldehyde + NADPH + H(+). The sequence is that of NADP-dependent alcohol dehydrogenase C (adhC) from Mycobacterium bovis (strain ATCC BAA-935 / AF2122/97).